A 388-amino-acid chain; its full sequence is Oxytocin receptor (388 aa).

The interval Met1–Pro32 is disordered. Residues Met1–Leu38 are Extracellular-facing. Asn8 and Asn26 each carry an N-linked (GlcNAc...) asparagine glycan. A helical membrane pass occupies residues Ala39–Ala63. Topologically, residues Leu64–Leu74 are cytoplasmic. The helical transmembrane segment at Phe75–Leu97 threads the bilayer. Residues Leu98 to Arg113 are Extracellular-facing. Cys112 and Cys187 are oxidised to a cystine. A helical membrane pass occupies residues Leu114–Leu135. Topologically, residues Asp136–Arg154 are cytoplasmic. The chain crosses the membrane as a helical span at residues Leu155–Phe175. Residues Ser176 to Thr202 lie on the Extracellular side of the membrane. The helical transmembrane segment at Trp203–Phe225 threads the bilayer. Residues Lys226–Lys274 lie on the Cytoplasmic side of the membrane. The chain crosses the membrane as a helical span at residues Met275 to Val293. Topologically, residues Gln294 to Ser308 are extracellular. A helical transmembrane segment spans residues Ala309–Phe331. Residues Thr332–Ala388 are Cytoplasmic-facing. The disordered stretch occupies residues Ser354–Ala388. Residues Ser365 and Ser367 each carry the phosphoserine modification. Positions Ser365–Ala388 are enriched in low complexity.

Belongs to the G-protein coupled receptor 1 family. Vasopressin/oxytocin receptor subfamily.

The protein resides in the cell membrane. In terms of biological role, receptor for oxytocin. The activity of this receptor is mediated by G proteins which activate a phosphatidylinositol-calcium second messenger system. In Rattus norvegicus (Rat), this protein is Oxytocin receptor (Oxtr).